Reading from the N-terminus, the 56-residue chain is Large ribosomal subunit protein bL32 (56 aa).

Residues 1–16 (MAVQKNRKTRSKRGMR) show a composition bias toward basic residues. Residues 1–37 (MAVQKNRKTRSKRGMRRSHDALGTATMSVDSTSGETH) form a disordered region. The span at 25–35 (ATMSVDSTSGE) shows a compositional bias: polar residues.

It belongs to the bacterial ribosomal protein bL32 family.

This Pseudoalteromonas atlantica (strain T6c / ATCC BAA-1087) protein is Large ribosomal subunit protein bL32.